The primary structure comprises 215 residues: Ras-related protein Rab-14 (215 aa).

Ala-2 is subject to N-acetylalanine. Residues Gly-21, Val-22, Gly-23, Lys-24, Ser-25, Cys-26, Ala-38, Asp-39, Cys-40, His-42, and Thr-43 each coordinate GTP. Ser-25 contributes to the Mg(2+) binding site. The Switch 1 signature appears at 42-47 (HTIGVE). The Mg(2+) site is built by Thr-43 and Asp-66. The Switch 2 motif lies at 68-77 (AGQERFRAVT). 6 residues coordinate GTP: Gly-69, Asn-124, Lys-125, Asp-127, Ala-155, and Lys-156. Residues 188 to 215 (SGVQHKPSAPQGGRLTSEPQPQREGCGC) are disordered. 2 S-geranylgeranyl cysteine lipidation sites follow: Cys-213 and Cys-215. Cys-215 is subject to Cysteine methyl ester.

It belongs to the small GTPase superfamily. Rab family. As to quaternary structure, interacts with ZFYVE20. Interacts with KIF16B. Interacts (GTP-bound form) with RUFY1; the interaction recruits RUFY1 onto endosomal membranes. Interacts (GTP-bound form) with RAB11FIP1 (via its C-terminus); the interactions doesn't mediate RAB11FIP1 rectruitment to membranes. Interacts with RAB11FIP2. Mg(2+) serves as cofactor.

The protein resides in the recycling endosome. Its subcellular location is the early endosome membrane. The protein localises to the golgi apparatus membrane. It is found in the golgi apparatus. It localises to the trans-Golgi network membrane. The protein resides in the cytoplasmic vesicle. Its subcellular location is the phagosome. It carries out the reaction GTP + H2O = GDP + phosphate + H(+). Regulated by guanine nucleotide exchange factors (GEFs) including DENND6A and DENND6B which promote the exchange of bound GDP for free GTP. Regulated by GTPase activating proteins (GAPs) which increase the GTP hydrolysis activity. Inhibited by GDP dissociation inhibitors (GDIs) which prevent Rab-GDP dissociation. In terms of biological role, the small GTPases Rab are key regulators of intracellular membrane trafficking, from the formation of transport vesicles to their fusion with membranes. Rabs cycle between an inactive GDP-bound form and an active GTP-bound form that is able to recruit to membranes different set of downstream effectors directly responsible for vesicle formation, movement, tethering and fusion. Involved in membrane trafficking between the Golgi complex and endosomes during early embryonic development. Regulates the Golgi to endosome transport of FGFR-containing vesicles during early development, a key process for developing basement membrane and epiblast and primitive endoderm lineages during early postimplantation development. May act by modulating the kinesin KIF16B-cargo association to endosomes. Regulates, together with its guanine nucleotide exchange factor DENND6A, the specific endocytic transport of ADAM10, N-cadherin/CDH2 shedding and cell-cell adhesion. Mediates endosomal tethering and fusion through the interaction with RUFY1 and RAB4B. Interaction with RAB11FIP1 may function in the process of neurite formation. The protein is Ras-related protein Rab-14 (RAB14) of Sus scrofa (Pig).